A 100-amino-acid chain; its full sequence is DNA-binding protein HU (100 aa).

Belongs to the bacterial histone-like protein family.

Functionally, histone-like DNA-binding protein which is capable of wrapping DNA to stabilize it, and thus to prevent its denaturation under extreme environmental conditions. This Synechocystis sp. (strain ATCC 27184 / PCC 6803 / Kazusa) protein is DNA-binding protein HU (hup).